We begin with the raw amino-acid sequence, 443 residues long: Protein AknT (443 aa).

This sequence belongs to the cytochrome P450 family.

In terms of biological role, involved in the biosynthesis of the anthracycline antitumor agent aclacinomycin A. AknT is required for the glycosylation of aklavinone aglycone by AknS to yield aclacinomycin T (rhodosaminyl-aklavinone). This Streptomyces galilaeus protein is Protein AknT.